Reading from the N-terminus, the 1056-residue chain is Sucrose-phosphate synthase (1056 aa).

The span at H112–T123 shows a compositional bias: basic and acidic residues. Positions H112 to E132 are disordered. S158 and S424 each carry phosphoserine. A disordered region spans residues N681–S700.

This sequence belongs to the glycosyltransferase 1 family. Homodimer or homotetramer. In terms of processing, phosphorylated at Ser-158 and Ser-424.

It carries out the reaction beta-D-fructose 6-phosphate + UDP-alpha-D-glucose = sucrose 6(F)-phosphate + UDP + H(+). It functions in the pathway glycan biosynthesis; sucrose biosynthesis; sucrose from D-fructose 6-phosphate and UDP-alpha-D-glucose: step 1/2. With respect to regulation, activity is regulated by phosphorylation and moderated by concentration of metabolites and light. In terms of biological role, plays a role in photosynthetic sucrose synthesis by catalyzing the rate-limiting step of sucrose biosynthesis from UDP-glucose and fructose- 6-phosphate. Involved in the regulation of carbon partitioning in the leaves of plants. May regulate the synthesis of sucrose and therefore play a major role as a limiting factor in the export of photoassimilates out of the leaf. Plays a role for sucrose availability that is essential for plant growth and fiber elongation. The chain is Sucrose-phosphate synthase (SPS1) from Spinacia oleracea (Spinach).